A 485-amino-acid polypeptide reads, in one-letter code: Glucagon receptor (485 aa).

The N-terminal stretch at 1-26 (MLLTQLHCPYLLLLLVVLSCLPKAPS) is a signal peptide. Residues 27–137 (AQVMDFLFEK…EIEVQKGVAK (111 aa)) are Extracellular-facing. Disulfide bonds link cysteine 44-cysteine 68, cysteine 59-cysteine 101, and cysteine 82-cysteine 122. Residues asparagine 47, asparagine 60, asparagine 75, and asparagine 79 are each glycosylated (N-linked (GlcNAc...) asparagine). The chain crosses the membrane as a helical span at residues 138–162 (MYSSYQVMYTVGYSLSLGALLLALV). The Cytoplasmic segment spans residues 163–174 (ILLGLRKLHCTR). Residues 175 to 199 (NYIHGNLFASFVLKAGSVLVIDWLL) traverse the membrane as a helical segment. Residues 200-226 (KTRYSQKIGDDLSVSVWLSDGAVAGCR) lie on the Extracellular side of the membrane. A disulfide bond links cysteine 225 and cysteine 295. Residues 227-250 (VATVIMQYGIIANYCWLLVEGVYL) form a helical membrane-spanning segment. Topologically, residues 251–264 (YSLLSITTFSEKSF) are cytoplasmic. The chain crosses the membrane as a helical span at residues 265-286 (FSLYLCIGWGSPLLFVIPWVVV). The Extracellular portion of the chain corresponds to 287 to 304 (KCLFENVQCWTSNDNMGF). The helical transmembrane segment at 305–327 (WWILRIPVLLAILINFFIFVRII) threads the bilayer. The Cytoplasmic portion of the chain corresponds to 328–351 (HLLVAKLRAHQMHYADYKFRLARS). The important for allosteric inhibitor binding stretch occupies residues 351–354 (STLT). The chain crosses the membrane as a helical span at residues 352–370 (TLTLIPLLGVHEVVFAFVT). At 371-382 (DEHAQGTLRSTK) the chain is on the extracellular side. The chain crosses the membrane as a helical span at residues 383–403 (LFFDLFFSSFQGLLVAVLYCF). Topologically, residues 404–485 (LNKEVQAELL…SLPRLADSPT (82 aa)) are cytoplasmic. Residues 455–485 (MSAGSSSGTGCEPSAKTSLASSLPRLADSPT) are disordered. A compositionally biased stretch (polar residues) spans 456-475 (SAGSSSGTGCEPSAKTSLAS). Phosphoserine is present on residues serine 460 and serine 476.

The protein belongs to the G-protein coupled receptor 2 family. Post-translationally, ligand-binding promotes phosphorylation of serine residues in the C-terminal cytoplasmic domain. Phosphorylation is important for receptor endocytosis after ligand-binding.

It localises to the cell membrane. In terms of biological role, G-protein coupled receptor for glucagon that plays a central role in the regulation of blood glucose levels and glucose homeostasis. Regulates the rate of hepatic glucose production by promoting glycogen hydrolysis and gluconeogenesis. Plays an important role in mediating the responses to fasting. Ligand binding causes a conformation change that triggers signaling via guanine nucleotide-binding proteins (G proteins) and modulates the activity of down-stream effectors, such as adenylate cyclase. Promotes activation of adenylate cyclase. Besides, plays a role in signaling via a phosphatidylinositol-calcium second messenger system. This Rattus norvegicus (Rat) protein is Glucagon receptor (Gcgr).